The sequence spans 152 residues: Smith-Magenis syndrome chromosomal region candidate gene 5 protein homolog (152 aa).

Positions 41-77 (TPCAGPSSQAPPQPPQASPPAAPDHSRTPSLLASSHS) are disordered. The segment covering 49–62 (QAPPQPPQASPPAA) has biased composition (pro residues).

The polypeptide is Smith-Magenis syndrome chromosomal region candidate gene 5 protein homolog (SMCR5) (Macaca fascicularis (Crab-eating macaque)).